A 719-amino-acid polypeptide reads, in one-letter code: Lanosterol synthase (719 aa).

Residues 118-160 form a PFTB 1 repeat; it reads RIEVIRYLVNHANPEDGGWGIHIEGKSTVFGTALNYVVLRILG. The active-site Proton donor is the Asp-451. PFTB repeat units follow at residues 478-523, 555-595, and 604-645; these read LKDS…MIEH, VKNA…SCVK, and SRRA…VVQT.

It belongs to the terpene cyclase/mutase family.

It catalyses the reaction (S)-2,3-epoxysqualene = lanosterol. It functions in the pathway terpene metabolism; lanosterol biosynthesis; lanosterol from farnesyl diphosphate: step 3/3. Its function is as follows. Catalyzes the cyclization of (S)-2,3 oxidosqualene to lanosterol, a reaction that forms the sterol nucleus. This Pneumocystis carinii protein is Lanosterol synthase (ERG7).